Here is a 1058-residue protein sequence, read N- to C-terminus: Carbamoyl phosphate synthase large chain (1058 aa).

The tract at residues 1-401 (MPKRKDIQKI…SLLKACRSLE (401 aa)) is carboxyphosphate synthetic domain. Positions 129, 169, 175, 176, 208, 210, 215, 241, 242, 243, 284, and 298 each coordinate ATP. Residues 133 to 327 (KQLMQELDQP…IAKLAAKIAV (195 aa)) enclose the ATP-grasp 1 domain. Residues Gln-284, Glu-298, and Asn-300 each contribute to the Mg(2+) site. 3 residues coordinate Mn(2+): Gln-284, Glu-298, and Asn-300. The tract at residues 402 to 546 (IGVCHNEMTS…YSTYELENES (145 aa)) is oligomerization domain. Residues 547 to 929 (VQSNKESILV…ALYKAFEANN (383 aa)) are carbamoyl phosphate synthetic domain. Positions 671–861 (EKALKELGIP…MAQIATKLIL (191 aa)) constitute an ATP-grasp 2 domain. Arg-707, Ser-746, Ile-748, Glu-752, Gly-777, Val-778, His-779, Ser-780, Gln-820, and Glu-832 together coordinate ATP. Positions 820, 832, and 834 each coordinate Mg(2+). Gln-820, Glu-832, and Asn-834 together coordinate Mn(2+). Residues 930–1058 (SHLSEFGQIV…ESRCFNIEAI (129 aa)) form the MGS-like domain. The segment at 930 to 1058 (SHLSEFGQIV…ESRCFNIEAI (129 aa)) is allosteric domain.

The protein belongs to the CarB family. In terms of assembly, composed of two chains; the small (or glutamine) chain promotes the hydrolysis of glutamine to ammonia, which is used by the large (or ammonia) chain to synthesize carbamoyl phosphate. Tetramer of heterodimers (alpha,beta)4. The cofactor is Mg(2+). Mn(2+) is required as a cofactor.

It catalyses the reaction hydrogencarbonate + L-glutamine + 2 ATP + H2O = carbamoyl phosphate + L-glutamate + 2 ADP + phosphate + 2 H(+). It carries out the reaction hydrogencarbonate + NH4(+) + 2 ATP = carbamoyl phosphate + 2 ADP + phosphate + 2 H(+). It functions in the pathway amino-acid biosynthesis; L-arginine biosynthesis; carbamoyl phosphate from bicarbonate: step 1/1. Its pathway is pyrimidine metabolism; UMP biosynthesis via de novo pathway; (S)-dihydroorotate from bicarbonate: step 1/3. In terms of biological role, large subunit of the glutamine-dependent carbamoyl phosphate synthetase (CPSase). CPSase catalyzes the formation of carbamoyl phosphate from the ammonia moiety of glutamine, carbonate, and phosphate donated by ATP, constituting the first step of 2 biosynthetic pathways, one leading to arginine and/or urea and the other to pyrimidine nucleotides. The large subunit (synthetase) binds the substrates ammonia (free or transferred from glutamine from the small subunit), hydrogencarbonate and ATP and carries out an ATP-coupled ligase reaction, activating hydrogencarbonate by forming carboxy phosphate which reacts with ammonia to form carbamoyl phosphate. The chain is Carbamoyl phosphate synthase large chain from Streptococcus pyogenes serotype M3 (strain SSI-1).